The chain runs to 1056 residues: Pleckstrin homology domain-containing family M member 1 (1056 aa).

An RUN domain is found at 41–183 (TSEDGDANTM…LSFELSYKSA (143 aa)). Disordered stretches follow at residues 215-245 (QRKE…RRNQ), 277-303 (GSKS…EDSD), and 360-422 (PAQA…QAHD). S219 carries the post-translational modification Phosphoserine. Positions 389–404 (PVESTSGQQPSSTVSE) are enriched in polar residues. Phosphoserine occurs at positions 432 and 435. The segment at 451–483 (SREQPLESASDHPIASYRGTPGSRPGLHRHFSQ) is disordered. S490 carries the phosphoserine modification. A PH 1 domain is found at 534 to 625 (GLMKLGTVER…WLDRVREALQ (92 aa)). The short motif at 632-638 (EDEWVNV) is the LIR element. Residues 654–1056 (CLSPSDLLSE…RKYQEQNIFA (403 aa)) form an interaction with RAB7A region. Residues 683–777 (DAIKESLLYL…WRDLVRKVLA (95 aa)) enclose the PH 2 domain. The Phorbol-ester/DAG-type zinc finger occupies 986–1040 (QHVYHCDLCTQRGFICQICQHHDIIFPFEFDTTVRCAECKTVFHQSCQAVVKKGC).

As to quaternary structure, interacts (via N- and C-terminus) with RAB7A (GTP-bound form). Simultaneously interacts with RAB7A and ARL8B; bringing about clustering and fusion of late endosomes and lysosomes. Interacts (via RUN domain) with ARL8B (GTP-bound form); the interaction is required for PLEKHM1 localization to lysosomes and for ARL8B function in delivery and degradation of endocytic and autophagic cargo in lysosomes. PLEKHM1 and PLEKHM2 compete for interaction with ARL8B. Interacts with ARL8A; the interaction is weaker than with ARL8B. Interacts with VPS41, VPS11, VPS18, VPS33A and VPS39; indicative for an association with the HOPS complex; the interactions with, at least, VPS41, VPS11, VPS18 and VPS33A require ARL8B. Interacts with GABARAP, GABARAPL, GABARAPL2, MAP1LC3A, MAP1LC3B and MAP1LC3C. Interacts with PAFAH1B. Interacts (via N- and C-terminus) with NDEL1. Interacts (via C-terminus) with MAP3K7. Interacts (via N- and C-terminus) with FAM98A. Interacts (via C-terminus) with DEF8; this interaction is weak but increased in a RAB7A-dependent manner. In colon carcinoma and breast carcinoma cells, it interacts with sialyl-lex-positive protein. (Microbial infection) Interacts with Salmonella typhimurium sifA. Expressed in placenta, liver, prostate, thymus, spleen, ovary, colon, colon carcinoma and peripheral blood lymphocytes (PBL). Weakly expressed in brain, lung, kidney, and testis. No expression in heart, skeletal muscle, pancreas and small intestine. Predominantly expressed in the breast carcinoma cell line MCF-7.

The protein localises to the autolysosome membrane. Its subcellular location is the endosome membrane. It localises to the late endosome membrane. It is found in the lysosome membrane. Acts as a multivalent adapter protein that regulates Rab7-dependent and HOPS complex-dependent fusion events in the endolysosomal system and couples autophagic and the endocytic trafficking pathways. Acts as a dual effector of RAB7A and ARL8B that simultaneously binds these GTPases, bringing about clustering and fusion of late endosomes and lysosomes. Required for late stages of endolysosomal maturation, facilitating both endocytosis-mediated degradation of growth factor receptors and autophagosome clearance. Interaction with Arl8b is a crucial factor in the terminal maturation of autophagosomes and to mediate autophagosome-lysosome fusion. Positively regulates lysosome peripheral distribution and ruffled border formation in osteoclasts. May be involved in negative regulation of endocytic transport from early endosome to late endosome/lysosome implicating its association with Rab7. May have a role in sialyl-lex-mediated transduction of apoptotic signals. Involved in bone resorption. Functionally, (Microbial infection) In case of infection contributes to Salmonella typhimurium pathogenesis by supporting the integrity of the Salmonella-containing vacuole (SCV) probably in concert with the HOPS complex and Rab7. The polypeptide is Pleckstrin homology domain-containing family M member 1 (Homo sapiens (Human)).